The chain runs to 368 residues: Ferredoxin--NADP reductase 2 (368 aa).

FAD-binding residues include D57, Q65, Y70, V110, F145, D310, and T351.

Belongs to the ferredoxin--NADP reductase type 2 family. In terms of assembly, homodimer. Requires FAD as cofactor.

It catalyses the reaction 2 reduced [2Fe-2S]-[ferredoxin] + NADP(+) + H(+) = 2 oxidized [2Fe-2S]-[ferredoxin] + NADPH. The polypeptide is Ferredoxin--NADP reductase 2 (Cupriavidus pinatubonensis (strain JMP 134 / LMG 1197) (Cupriavidus necator (strain JMP 134))).